A 396-amino-acid chain; its full sequence is Cyclic GMP-AMP synthase-like receptor (396 aa).

Residues Ser63 and 75 to 77 (EFD) contribute to the ATP site. Mg(2+) is bound by residues Glu75, Asp77, and Asp194. Residue Asp194 participates in GTP binding. ATP is bound by residues 241 to 244 (QEQE), Lys262, and 275 to 279 (SYYLK). The Mn(2+) site is built by Val286, Glu287, and Asp292. Positions 376 to 396 (IMNGGNPQQSANAENGSCLSM) are disordered. Over residues 380 to 396 (GNPQQSANAENGSCLSM) the composition is skewed to polar residues.

This sequence belongs to the mab-21 family. Mg(2+) serves as cofactor. Mn(2+) is required as a cofactor.

It carries out the reaction GTP + ATP = 2',3'-cGAMP + 2 diphosphate. The catalysed reaction is GTP + ATP = pppGp(2'-5')A + diphosphate. It catalyses the reaction pppGp(2'-5')A = 2',3'-cGAMP + diphosphate. In terms of biological role, nucleotidyltransferase that catalyzes the formation of cyclic GMP-AMP (2',3'-cGAMP) from ATP and GTP and plays a key role in innate immunity. Acts as a key sensor of double-stranded RNA (dsRNA), the presence of dsRNA in the cytoplasm being a danger signal that triggers the immune responses. Directly binds dsRNA, activating the nucleotidyltransferase activity, leading to synthesis of 2',3'-cGAMP, a second messenger that binds to and activates Sting, thereby triggering the immune response via activation of the NF-kappa-B transcription factor. This chain is Cyclic GMP-AMP synthase-like receptor, found in Aethina tumida (Small hive beetle).